The primary structure comprises 87 residues: Large ribosomal subunit protein eL33 (87 aa).

It belongs to the eukaryotic ribosomal protein eL33 family.

The protein is Large ribosomal subunit protein eL33 of Pyrococcus abyssi (strain GE5 / Orsay).